Here is a 248-residue protein sequence, read N- to C-terminus: 2,3-bisphosphoglycerate-dependent phosphoglycerate mutase 2 (248 aa).

Substrate is bound by residues 8–15 (RHGESAWN), 21–22 (TG), arginine 60, 87–90 (EKHY), lysine 98, 114–115 (RR), and 183–184 (GN). Histidine 9 (tele-phosphohistidine intermediate) is an active-site residue. Glutamate 87 functions as the Proton donor/acceptor in the catalytic mechanism.

The protein belongs to the phosphoglycerate mutase family. BPG-dependent PGAM subfamily.

It catalyses the reaction (2R)-2-phosphoglycerate = (2R)-3-phosphoglycerate. The protein operates within carbohydrate degradation; glycolysis; pyruvate from D-glyceraldehyde 3-phosphate: step 3/5. Its function is as follows. Catalyzes the interconversion of 2-phosphoglycerate and 3-phosphoglycerate. In Bacteroides thetaiotaomicron (strain ATCC 29148 / DSM 2079 / JCM 5827 / CCUG 10774 / NCTC 10582 / VPI-5482 / E50), this protein is 2,3-bisphosphoglycerate-dependent phosphoglycerate mutase 2.